Consider the following 276-residue polypeptide: Putative pyruvate, phosphate dikinase regulatory protein (276 aa).

150 to 157 (GVSRTSKT) serves as a coordination point for ADP.

The protein belongs to the pyruvate, phosphate/water dikinase regulatory protein family. PDRP subfamily.

It catalyses the reaction N(tele)-phospho-L-histidyl/L-threonyl-[pyruvate, phosphate dikinase] + ADP = N(tele)-phospho-L-histidyl/O-phospho-L-threonyl-[pyruvate, phosphate dikinase] + AMP + H(+). The catalysed reaction is N(tele)-phospho-L-histidyl/O-phospho-L-threonyl-[pyruvate, phosphate dikinase] + phosphate + H(+) = N(tele)-phospho-L-histidyl/L-threonyl-[pyruvate, phosphate dikinase] + diphosphate. Its function is as follows. Bifunctional serine/threonine kinase and phosphorylase involved in the regulation of the pyruvate, phosphate dikinase (PPDK) by catalyzing its phosphorylation/dephosphorylation. The sequence is that of Putative pyruvate, phosphate dikinase regulatory protein from Lacticaseibacillus casei (strain BL23) (Lactobacillus casei).